Consider the following 65-residue polypeptide: Disintegrin CC8A (65 aa).

Residues 1-65 (MNSAHPCCDP…SDCPRNRIKK (65 aa)) enclose the Disintegrin domain. 4 disulfide bridges follow: Cys7-Cys30, Cys21-Cys27, Cys26-Cys51, and Cys39-Cys58. The short motif at 43–45 (RGD) is the Cell attachment site element.

This sequence belongs to the disintegrin family. Dimeric disintegrin subfamily. Heterodimer with CC8B; disulfide-linked. Expressed by the venom gland.

The protein resides in the secreted. Inhibits integrins alpha-IIb/beta-3 (ITGA2B/ITGB3), alpha-V/beta-3 (ITGAV/ITGB3), and alpha-5/beta-1 (ITGA5/ITGB1). The chain is Disintegrin CC8A from Cerastes cerastes (Horned desert viper).